The following is a 256-amino-acid chain: 14-3-3-like protein GF14-C (256 aa).

It belongs to the 14-3-3 family. May form a complex with the transcriptional activator VP1 and the bZIP transcription factor EMBP1. In terms of tissue distribution, expressed in seedlings, internodes and panicles.

The protein resides in the cytoplasm. It is found in the nucleus. Its function is as follows. Is associated with a DNA binding complex that binds to the G box, a well-characterized cis-acting DNA regulatory element found in plant genes. In Oryza sativa subsp. japonica (Rice), this protein is 14-3-3-like protein GF14-C (GF14C).